The sequence spans 113 residues: Large ribosomal subunit protein bL19 (113 aa).

This sequence belongs to the bacterial ribosomal protein bL19 family.

This protein is located at the 30S-50S ribosomal subunit interface and may play a role in the structure and function of the aminoacyl-tRNA binding site. The protein is Large ribosomal subunit protein bL19 of Carboxydothermus hydrogenoformans (strain ATCC BAA-161 / DSM 6008 / Z-2901).